Here is a 321-residue protein sequence, read N- to C-terminus: Translation initiation factor eIF2B subunit alpha (321 aa).

It belongs to the eIF-2B alpha/beta/delta subunits family. As to quaternary structure, component of the translation initiation factor 2B (eIF2B) complex which is a heterodecamer of two sets of five different subunits: alpha, beta, gamma, delta and epsilon. Subunits alpha, beta and delta comprise a regulatory subcomplex and subunits epsilon and gamma comprise a catalytic subcomplex. Within the complex, the hexameric regulatory complex resides at the center, with the two heterodimeric catalytic subcomplexes bound on opposite sides.

It is found in the cytoplasm. Its subcellular location is the cytosol. Its function is as follows. Acts as a component of the translation initiation factor 2B (eIF2B) complex, which catalyzes the exchange of GDP for GTP on eukaryotic initiation factor 2 (eIF2) gamma subunit. Its guanine nucleotide exchange factor activity is repressed when bound to eIF2 complex phosphorylated on the alpha subunit, thereby limiting the amount of methionyl-initiator methionine tRNA available to the ribosome and consequently global translation is repressed. In Dictyostelium discoideum (Social amoeba), this protein is Translation initiation factor eIF2B subunit alpha (eif2b1).